A 200-amino-acid chain; its full sequence is MARYTGPSWKVSRRLGISLSGTGKELERRPYAPGQHGPTQRKKISEYGLQQAEKQKLRHMYGLTERQFKNTFNKAGKLRGKHGENFMILLEQRLDNIVYRLGLARTRRAARQLVNHGHITVDGKRVDIPSYQVSVGQVISVREKSAKNSAIAESLEVSSFVPEYVTFDAEKLTGSLNRLPERSELAAEINEAFIVEFYSR.

The segment at 22-43 is disordered; it reads TGKELERRPYAPGQHGPTQRKK. Residues 92 to 170 enclose the S4 RNA-binding domain; it reads QRLDNIVYRL…VPEYVTFDAE (79 aa).

Belongs to the universal ribosomal protein uS4 family. In terms of assembly, part of the 30S ribosomal subunit. Contacts protein S5. The interaction surface between S4 and S5 is involved in control of translational fidelity.

In terms of biological role, one of the primary rRNA binding proteins, it binds directly to 16S rRNA where it nucleates assembly of the body of the 30S subunit. Its function is as follows. With S5 and S12 plays an important role in translational accuracy. The protein is Small ribosomal subunit protein uS4 of Listeria monocytogenes serovar 1/2a (strain ATCC BAA-679 / EGD-e).